A 165-amino-acid chain; its full sequence is Disulfide bond formation protein B (165 aa).

The Cytoplasmic portion of the chain corresponds to 1–10; sequence MPAWLTNRTI. A helical transmembrane segment spans residues 11 to 27; it reads YFLCFLAIAGLMGFAFY. Over 28–45 the chain is Periplasmic; the sequence is LQYVKDLEPCPLCMAQRI. An intrachain disulfide couples C37 to C40. The helical transmembrane segment at 46 to 62 threads the bilayer; sequence AFVLAGLVFLAAALHNP. Residues 63–68 are Cytoplasmic-facing; it reads KNTGTT. The helical transmembrane segment at 69 to 86 threads the bilayer; that stretch reads VYAFLGWVTTLGGAALAT. Over 87 to 143 the chain is Periplasmic; that stretch reads RQLWLQSLPADQVPACGPGLEYMLEAFPFSEVLTMMLTGTGECAEVQWTFLGLSIPG. C102 and C129 are joined by a disulfide. Residues 144-162 form a helical membrane-spanning segment; the sequence is WTLVAFIGFTAVWAFAWVR. Topologically, residues 163–165 are cytoplasmic; sequence RPR.

The protein belongs to the DsbB family.

It localises to the cell inner membrane. Required for disulfide bond formation in some periplasmic proteins. Acts by oxidizing the DsbA protein. The sequence is that of Disulfide bond formation protein B from Hahella chejuensis (strain KCTC 2396).